The chain runs to 141 residues: Large ribosomal subunit protein uL11 (141 aa).

It belongs to the universal ribosomal protein uL11 family. In terms of assembly, part of the ribosomal stalk of the 50S ribosomal subunit. Interacts with L10 and the large rRNA to form the base of the stalk. L10 forms an elongated spine to which L12 dimers bind in a sequential fashion forming a multimeric L10(L12)X complex. In terms of processing, one or more lysine residues are methylated.

Its function is as follows. Forms part of the ribosomal stalk which helps the ribosome interact with GTP-bound translation factors. The sequence is that of Large ribosomal subunit protein uL11 from Streptococcus agalactiae serotype Ia (strain ATCC 27591 / A909 / CDC SS700).